Here is a 204-residue protein sequence, read N- to C-terminus: Somatotropin (204 aa).

The N-terminal stretch at 1 to 17 (MDRVVLMLSVMSLGVSS) is a signal peptide. The residue at position 18 (Gln-18) is a Pyrrolidone carboxylic acid. A Zn(2+)-binding site is contributed by His-36. An intrachain disulfide couples Cys-69 to Cys-177. Glu-186 serves as a coordination point for Zn(2+). An intrachain disulfide couples Cys-194 to Cys-202.

The protein belongs to the somatotropin/prolactin family.

The protein localises to the secreted. In terms of biological role, growth hormone plays an important role in growth control and is involved in the regulation of several anabolic processes. Implicated as an osmoregulatory substance important for seawater adaptation. The chain is Somatotropin (gh) from Sparus aurata (Gilthead sea bream).